The primary structure comprises 42 residues: Photosystem II reaction center protein J (42 aa).

The chain crosses the membrane as a helical span at residues 10-30; that stretch reads IPLWLVGTVVGIAALTLLSVF.

The protein belongs to the PsbJ family. PSII is composed of 1 copy each of membrane proteins PsbA, PsbB, PsbC, PsbD, PsbE, PsbF, PsbH, PsbI, PsbJ, PsbK, PsbL, PsbM, PsbT, PsbX, PsbY, PsbZ, Psb30/Ycf12, at least 3 peripheral proteins of the oxygen-evolving complex and a large number of cofactors. It forms dimeric complexes.

It is found in the plastid. Its subcellular location is the chloroplast thylakoid membrane. In terms of biological role, one of the components of the core complex of photosystem II (PSII). PSII is a light-driven water:plastoquinone oxidoreductase that uses light energy to abstract electrons from H(2)O, generating O(2) and a proton gradient subsequently used for ATP formation. It consists of a core antenna complex that captures photons, and an electron transfer chain that converts photonic excitation into a charge separation. This Tupiella akineta (Green alga) protein is Photosystem II reaction center protein J.